Here is an 890-residue protein sequence, read N- to C-terminus: DNA mismatch repair protein MutS (890 aa).

607 to 614 serves as a coordination point for ATP; sequence GPNMSGKS.

This sequence belongs to the DNA mismatch repair MutS family.

Its function is as follows. This protein is involved in the repair of mismatches in DNA. It is possible that it carries out the mismatch recognition step. This protein has a weak ATPase activity. This is DNA mismatch repair protein MutS from Bacillus mycoides (strain KBAB4) (Bacillus weihenstephanensis).